A 989-amino-acid polypeptide reads, in one-letter code: Presequence protease, mitochondrial (989 aa).

A mitochondrion-targeting transit peptide spans 1–16; the sequence is MLRFQRFASSYAQAQA. Zn(2+) is bound at residue H84. Catalysis depends on E87, which acts as the Proton acceptor. H88 provides a ligand contact to Zn(2+). The active site involves E160. E185 serves as a coordination point for Zn(2+). At S920 the chain carries Phosphoserine. 972 to 979 contacts ATP; the sequence is GPGIEGKT.

It belongs to the peptidase M16 family. PreP subfamily. As to quaternary structure, monomer and homodimer; homodimerization is induced by binding of the substrate. Zn(2+) is required as a cofactor.

It is found in the mitochondrion intermembrane space. The protein localises to the mitochondrion matrix. Its activity is regulated as follows. Activated by nucleotides, including ATP, GTP, CTP, UTP, and ADP. Activated by copper, manganese, calcium and magnesium ions; copper and manganese restore activity following inactivation by EDTA (ethylenediaminetetraacetic acid). Inhibited by metal chelators including EDTA, EGTA (ethylene glycol bis(2-aminoethyl)tetraacetic acid), and 1,10-phenanthroline. Inhibited by copper, zinc, and iron ions. Also inhibited by dithiothreitol p-mercuribenzenesulfonic acid, N-ethylmaleimide, protoporphyrin, hemin, protamine and triarginine. Degrades mitochondrial transit peptides after their cleavage in the intermembrane space or in the matrix, and presequence peptides; clearance of these peptides is required to keep the presequence processing machinery running. Preferentially cleaves the N-terminal side of paired basic amino acid residues. Also degrades other unstructured peptides. May function as an ATP-dependent peptidase as opposed to a metalloendopeptidase. This chain is Presequence protease, mitochondrial, found in Saccharomyces cerevisiae (strain ATCC 204508 / S288c) (Baker's yeast).